The following is an 80-amino-acid chain: Translation initiation factor IF-1, chloroplastic (80 aa).

The S1-like domain occupies Met1–Arg72.

The protein belongs to the IF-1 family. In terms of assembly, component of the 30S ribosomal translation pre-initiation complex which assembles on the 30S ribosome in the order IF-2 and IF-3, IF-1 and N-formylmethionyl-tRNA(fMet); mRNA recruitment can occur at any time during PIC assembly.

It localises to the plastid. It is found in the chloroplast. Functionally, one of the essential components for the initiation of protein synthesis. Stabilizes the binding of IF-2 and IF-3 on the 30S subunit to which N-formylmethionyl-tRNA(fMet) subsequently binds. Helps modulate mRNA selection, yielding the 30S pre-initiation complex (PIC). Upon addition of the 50S ribosomal subunit IF-1, IF-2 and IF-3 are released leaving the mature 70S translation initiation complex. This is Translation initiation factor IF-1, chloroplastic from Psilotum nudum (Whisk fern).